The chain runs to 33 residues: Toxin BcV (33 aa).

Cys6 and Cys30 are disulfide-bonded.

It localises to the secreted. It is found in the nematocyst. Potently and reversibly blocks mammalian Kv11/KCNH/ERG voltage-gated potassium channels. Acts as a gating-modifier toxin that shifts the voltage-dependence of ERG activation in the positive direction and suppresses its current amplitudes elicited by strong depolarizing pulses that maximally activate the channels. This chain is Toxin BcV, found in Bunodosoma caissarum (Sea anemone).